The primary structure comprises 556 residues: Polypeptide N-acetylgalactosaminyltransferase 13 (556 aa).

The Cytoplasmic segment spans residues 1 to 4; sequence MRRL. A helical; Signal-anchor for type II membrane protein membrane pass occupies residues 5 to 27; the sequence is VYCKVVLATSLMWVLVDVFLLLY. The Lumenal segment spans residues 28 to 556; that stretch reads FSECNKCDDK…WLLRNMTLGT (529 aa). 2 N-linked (GlcNAc...) asparagine glycosylation sites follow: N94 and N116. Intrachain disulfides connect C105–C338, C329–C407, C441–C458, C481–C496, and C522–C539. A catalytic subdomain A region spans residues 114-224; sequence LPNTSVVIVF…LGWLEPLLAR (111 aa). Substrate contacts are provided by D155 and R185. Residues D208 and H210 each contribute to the Mn(2+) site. Positions 284 to 346 are catalytic subdomain B; that stretch reads PVRTPTMAGG…TCSHVGHVFR (63 aa). W315 is a substrate binding site. Position 343 (H343) interacts with Mn(2+). Substrate-binding residues include R346 and Y351. A Ricin B-type lectin domain is found at 428–550; sequence YSLGEIRNVE…GSRSQQWLLR (123 aa). Residue N551 is glycosylated (N-linked (GlcNAc...) asparagine).

This sequence belongs to the glycosyltransferase 2 family. GalNAc-T subfamily. Mn(2+) is required as a cofactor.

Its subcellular location is the golgi apparatus membrane. The catalysed reaction is L-seryl-[protein] + UDP-N-acetyl-alpha-D-galactosamine = a 3-O-[N-acetyl-alpha-D-galactosaminyl]-L-seryl-[protein] + UDP + H(+). The enzyme catalyses L-threonyl-[protein] + UDP-N-acetyl-alpha-D-galactosamine = a 3-O-[N-acetyl-alpha-D-galactosaminyl]-L-threonyl-[protein] + UDP + H(+). The protein operates within protein modification; protein glycosylation. Functionally, catalyzes the initial reaction in O-linked oligosaccharide biosynthesis, the transfer of an N-acetyl-D-galactosamine (GalNAc) residue from UDP-GalNAc to a serine or threonine residue on the protein receptor. Generates GalNAc-O-Ser/Thr structure also known as Tn antigen, which itself is immunogenic but also serves as a precursor for the synthesis of different mucin-type O-glycan core structures. Contributes to the synthesis of O-linked glycans on mucins and proteoglycans of the central nervous system. Can glycosylate both unmodified peptides and glycopeptides that already contain an O-linked GalNAc sugar. Transfers GalNAc to Thr-/Ser-rich tandem repeats GTTPSPVPTTSTTSAP of MUC5AC. Transfers GalNAc to three consecutive serine/threonine residues on SDC3 forming a triplet-Tn epitope expressed in Purkinje cells of the developing brain. May promote neurogenesis through glycosylation and stabilization of PDPN. The protein is Polypeptide N-acetylgalactosaminyltransferase 13 (Galnt13) of Rattus norvegicus (Rat).